Consider the following 443-residue polypeptide: Large ribosomal subunit protein mL50 (443 aa).

The disordered stretch occupies residues 121–145 (QPTRADAPEKIRDPNYEPATSGAGL). Over residues 126 to 135 (DAPEKIRDPN) the composition is skewed to basic and acidic residues.

Belongs to the mitochondrion-specific ribosomal protein mL50 family. As to quaternary structure, component of the mitochondrial large ribosomal subunit (mt-LSU). Mature N.crassa 74S mitochondrial ribosomes consist of a small (37S) and a large (54S) subunit. The 37S small subunit contains a 16S ribosomal RNA (16S mt-rRNA) and 32 different proteins. The 54S large subunit contains a 23S rRNA (23S mt-rRNA) and 42 different proteins.

It localises to the mitochondrion. Its function is as follows. Component of the mitochondrial ribosome (mitoribosome), a dedicated translation machinery responsible for the synthesis of mitochondrial genome-encoded proteins, including at least some of the essential transmembrane subunits of the mitochondrial respiratory chain. The mitoribosomes are attached to the mitochondrial inner membrane and translation products are cotranslationally integrated into the membrane. The sequence is that of Large ribosomal subunit protein mL50 (mrpl13) from Neurospora crassa (strain ATCC 24698 / 74-OR23-1A / CBS 708.71 / DSM 1257 / FGSC 987).